A 261-amino-acid polypeptide reads, in one-letter code: Probable enoyl-CoA hydratase EchA17 (261 aa).

It belongs to the enoyl-CoA hydratase/isomerase family.

The enzyme catalyses a (3S)-3-hydroxyacyl-CoA = a (2E)-enoyl-CoA + H2O. It catalyses the reaction a 4-saturated-(3S)-3-hydroxyacyl-CoA = a (3E)-enoyl-CoA + H2O. In terms of biological role, could possibly oxidize fatty acids using specific components. This is Probable enoyl-CoA hydratase EchA17 (echA17) from Mycobacterium bovis (strain BCG / Pasteur 1173P2).